Consider the following 362-residue polypeptide: Fructose-bisphosphate aldolase (362 aa).

Serine 63 lines the D-glyceraldehyde 3-phosphate pocket. Aspartate 112 acts as the Proton donor in catalysis. 4 residues coordinate Zn(2+): histidine 113, aspartate 147, glutamate 177, and histidine 229. Glycine 230 is a binding site for dihydroxyacetone phosphate. Histidine 268 is a binding site for Zn(2+). Residues 269–271 (GGS) and 290–293 (NVDT) each bind dihydroxyacetone phosphate.

It belongs to the class II fructose-bisphosphate aldolase family. Homodimer. Requires Zn(2+) as cofactor.

It catalyses the reaction beta-D-fructose 1,6-bisphosphate = D-glyceraldehyde 3-phosphate + dihydroxyacetone phosphate. The protein operates within carbohydrate degradation; glycolysis; D-glyceraldehyde 3-phosphate and glycerone phosphate from D-glucose: step 4/4. Functionally, catalyzes the aldol condensation of dihydroxyacetone phosphate (DHAP or glycerone-phosphate) with glyceraldehyde 3-phosphate (G3P) to form fructose 1,6-bisphosphate (FBP) in gluconeogenesis and the reverse reaction in glycolysis. The chain is Fructose-bisphosphate aldolase (fba) from Neurospora crassa (strain ATCC 24698 / 74-OR23-1A / CBS 708.71 / DSM 1257 / FGSC 987).